The sequence spans 211 residues: Small ribosomal subunit protein uS3 (211 aa).

Positions 16 to 85 (IDEYFKGKLV…NPQIEVKPLE (70 aa)) constitute a KH type-2 domain.

The protein belongs to the universal ribosomal protein uS3 family. As to quaternary structure, part of the 30S ribosomal subunit.

Binds the lower part of the 30S subunit head. This chain is Small ribosomal subunit protein uS3, found in Methanococcus vannielii (strain ATCC 35089 / DSM 1224 / JCM 13029 / OCM 148 / SB).